The sequence spans 563 residues: Beta-catenin-like protein 1 (563 aa).

An N-acetylmethionine modification is found at Met-1. Residues 1–49 are disordered; sequence MDVGELLSYQPNRGTKRPRDDEEEEQKMRRKQTGTRERGRYREEEMTVV. The Nuclear localization signal signature appears at 16–33; it reads KRPRDDEEEEQKMRRKQT. The segment covering 34–45 has biased composition (basic and acidic residues); sequence GTRERGRYREEE. 2 HEAT repeats span residues 79–129 and 134–176; these read ESSV…VVAT and YHLL…TLHE. Lys-91 is subject to N6-acetyllysine. The Nuclear export signal (NES) signature appears at 130–140; sequence MPDLYHLLVEL. 5 ARM repeats span residues 178–228, 229–273, 274–323, 325–363, and 364–417; these read EEGA…MAEF, RPEM…LQDN, DENR…CLML, SNRE…AMIG, and PEGT…LLRN. A Phosphoserine modification is found at Ser-389. Residues 476-540 adopt a coiled-coil conformation; sequence DTEEEFYLRR…HIIKEYAENI (65 aa). At Ser-545 the chain carries Phosphoserine.

Component of the PRP19-CDC5L splicing complex composed of a core complex comprising a homotetramer of PRPF19, CDC5L, PLRG1 and BCAS2, and at least three less stably associated proteins CTNNBL1, CWC15 and HSPA8. Interacts directly with CWC15 and CDC5L in the complex. Interacts with AICDA; the interaction is important for the antibody diversification activity of AICDA. Interacts with PRPF31 (via its NLS). Interacts (via its N-terminal NLS) with KPNA1 and KPNA2. Widely expressed with highest levels in skeletal muscle, placenta, heart, spleen, testis and thyroid.

The protein resides in the nucleus. It localises to the cytoplasm. Its function is as follows. Component of the PRP19-CDC5L complex that forms an integral part of the spliceosome and is required for activating pre-mRNA splicing. Participates in AID/AICDA-mediated somatic hypermutation (SHM) and class-switch recombination (CSR), 2 processes resulting in the production of high-affinity, mutated isotype-switched antibodies. This Homo sapiens (Human) protein is Beta-catenin-like protein 1 (CTNNBL1).